Consider the following 410-residue polypeptide: Cysteine desulfurase IscS (410 aa).

Pyridoxal 5'-phosphate is bound by residues 80 to 81 (AT), Asn160, Gln188, and 208 to 210 (SGH). Lys211 bears the N6-(pyridoxal phosphate)lysine mark. Position 248 (Thr248) interacts with pyridoxal 5'-phosphate. Catalysis depends on Cys334, which acts as the Cysteine persulfide intermediate. Cys334 is a [2Fe-2S] cluster binding site.

This sequence belongs to the class-V pyridoxal-phosphate-dependent aminotransferase family. NifS/IscS subfamily. Homodimer. Forms a heterotetramer with IscU, interacts with other sulfur acceptors. Pyridoxal 5'-phosphate is required as a cofactor.

The protein resides in the cytoplasm. It catalyses the reaction (sulfur carrier)-H + L-cysteine = (sulfur carrier)-SH + L-alanine. The protein operates within cofactor biosynthesis; iron-sulfur cluster biosynthesis. Master enzyme that delivers sulfur to a number of partners involved in Fe-S cluster assembly, tRNA modification or cofactor biosynthesis. Catalyzes the removal of elemental sulfur atoms from cysteine to produce alanine. Functions as a sulfur delivery protein for Fe-S cluster synthesis onto IscU, an Fe-S scaffold assembly protein, as well as other S acceptor proteins. The polypeptide is Cysteine desulfurase IscS (Rickettsia typhi (strain ATCC VR-144 / Wilmington)).